The chain runs to 337 residues: Metacaspase III c (337 aa).

2 consecutive propeptides follow at residues 1-6 (MGFLRR) and 116-125 (VPPAATGTRR). Cys-202 is subject to Cysteine sulfenic acid (-SOH). A disulfide bond links Cys-202 and Cys-259. His-207 is an active-site residue. Ca(2+) contacts are provided by Asp-224, Asp-240, and Asp-241. The active site involves Cys-264. Residue Asp-271 participates in Ca(2+) binding. A propeptide spanning residues 290–337 (NFDFKKLLGKFGIDDFDKFGGEALGKINGDALGKVGKDALGKLNKFFG) is cleaved from the precursor.

This sequence belongs to the peptidase C14B family. Auto-proteolytic cleavage into a large and a small subunit which probably remain associated by non-covalent bonds. Post-translationally, following oxidative stress, the oxidation of Cys-202 leads to the formation of a disulfide bond between Cys-202 and Cys-259 which enhances catalytic activity.

Activated by Ca(2+). Functionally, cysteine protease that cleaves specifically after arginine residues. The sequence is that of Metacaspase III c from Phaeodactylum tricornutum (strain CCAP 1055/1).